Consider the following 268-residue polypeptide: AN1-type zinc finger protein 1 (268 aa).

An N-acetylalanine modification is found at A2. 2 AN1-type zinc fingers span residues 4 to 52 and 58 to 106; these read LDIG…VINE and QHTS…IPKP. Residues C10, C15, C25, C28, C33, H36, H42, C44, C64, C69, C79, C82, C87, H90, H96, and C98 each contribute to the Zn(2+) site. The segment at 160 to 260 is ubiquitin-like; the sequence is QTERIYFQVF…EYLNDEEQFC (101 aa).

In terms of assembly, associates with the 26S proteasome; this association occurs upon exposure to arsenite and is reduced in the presence of ATP. Interacts (via AN1-type 1 and 2 zinc fingers) with PSMD1; this interaction is increased upon arsenite treatment and occurs in an ATP-independent manner. Interacts with PSMC4. Interacts with PSMA1. Interacts (via its ubiquitin-like region) with VCP; this interaction occurs in an arsenite-dependent manner and is necessary for the recruitment of the ubiquitin-selective ATPase VCP to stress granules (SGs).

Its subcellular location is the cytoplasm. It localises to the stress granule. Functionally, plays a role in the regulation of cytoplasmic stress granules (SGs) turnover. SGs are dynamic and transient cytoplasmic ribonucleoprotein assemblies important for cellular protein homeostasis when protein production is suspended after acute exogenous stress. Associates with SGs and is involved in the efficient and specific arsenite-induced clearance process of SGs through the recruitment of the ubiquitin-selective ATPase VCP and the 26S proteasome. This process requires both complexes for efficient degradation of damaged ubiquitinated SG proteins during recovery from arsenite stress, and hence avoiding aberrant cytoplasmic SGs degradation via autophagy. This is AN1-type zinc finger protein 1 from Homo sapiens (Human).